Reading from the N-terminus, the 501-residue chain is UPF0616 protein C1687.04 (501 aa).

The protein belongs to the UPF0616 family.

It localises to the cytoplasm. It is found in the nucleus. This chain is UPF0616 protein C1687.04, found in Schizosaccharomyces pombe (strain 972 / ATCC 24843) (Fission yeast).